A 110-amino-acid polypeptide reads, in one-letter code: UPF0060 membrane protein Dtpsy_1668 (110 aa).

4 helical membrane-spanning segments follow: residues 7–27, 33–53, 63–83, and 86–106; these read LALFLLTAVAEIVGCYLPWLW, SAWLLVPAAASLALFAWLLTL, AAYGGVYVAVALVWLWTVDGV, and GPWDWLGVSVTLCGMAIIAFA.

It belongs to the UPF0060 family.

It localises to the cell inner membrane. The sequence is that of UPF0060 membrane protein Dtpsy_1668 from Acidovorax ebreus (strain TPSY) (Diaphorobacter sp. (strain TPSY)).